The following is a 442-amino-acid chain: Chaperone protein dnaJ A6, chloroplastic (442 aa).

The transit peptide at 1-82 (MAIIQLGSTC…PRRGSRFTVR (82 aa)) directs the protein to the chloroplast. The J domain maps to 86 to 150 (DYYSVLGVSK…EKKSLYDRYG (65 aa)). A CR-type zinc finger spans residues 211-292 (GMEKEIEISR…CSGDGRVRKT (82 aa)). 8 residues coordinate Zn(2+): C224, C227, C241, C244, C267, C270, C280, and C283. CXXCXGXG motif repeat units lie at residues 224-231 (CGTCEGSG), 241-248 (CTTCGGQG), 267-274 (CSSCNGTG), and 280-287 (CGTCSGDG).

This sequence belongs to the DnaJ family.

The protein resides in the plastid. It is found in the chloroplast. Functionally, may function together with HSC70 chaperone to assist protein folding and prevent protein aggregation during heat stress in the chloroplast. This Arabidopsis thaliana (Mouse-ear cress) protein is Chaperone protein dnaJ A6, chloroplastic.